Consider the following 1230-residue polypeptide: Basic-leucine zipper transcription factor A (1230 aa).

Disordered stretches follow at residues 65 to 108 (LYLS…NIIN), 180 to 233 (LNGN…QQHQ), 270 to 310 (QQLK…PSTQ), and 422 to 578 (HQQN…RKKD). Low complexity-rich tracts occupy residues 69 to 108 (NSSNNTNNNNNNNNNNNNNNNNNNNNNNNNNNNNNNNIIN), 192 to 233 (NNFS…QQHQ), 270 to 287 (QQLKQQQPQQHPIQSPQP), 295 to 310 (PSLQQHQTYSYTPSTQ), and 422 to 447 (HQQNIQQHQNQNQQQLQLPQPQQQQH). 2 stretches are compositionally biased toward polar residues: residues 448–458 (KSTPPTQNTPP) and 466–475 (TPTLTTNGKG). The segment covering 476 to 503 (SKSTPPTTTTTTTTTTSSSSSSSSSSSS) has biased composition (low complexity). The segment covering 523–537 (PHHHHHHHNNHHHHH) has biased composition (basic residues). The span at 541-554 (FSDENDEEFIDENE) shows a compositional bias: acidic residues. Residues 555–618 (DKSKNKSRSS…LGDVMRPDFD (64 aa)) form the bZIP domain. The basic motif stretch occupies residues 556–586 (KSKNKSRSSQNIASRNYRQRKKDHISEVEFK). Positions 562-571 (RSSQNIASRN) are enriched in polar residues. The leucine-zipper stretch occupies residues 590-604 (LSLENERLKQENHLL). Residues 728–753 (LKIDMELRTERDQLDREIKELFLKKI) adopt a coiled-coil conformation. 2 disordered regions span residues 772 to 869 (TFNS…EHNK) and 1025 to 1230 (NYTN…TPNI). 2 stretches are compositionally biased toward low complexity: residues 774 to 803 (NSESDYPSSPSSASNSSNSPPTSSPTIITP) and 810 to 831 (NNQNNQNNNQMINSNSNNSNNN). Positions 832–845 (SHHHHHHHHSHLHG) are enriched in basic residues. A compositionally biased stretch (polar residues) spans 1025–1042 (NYTNSPLITSSPSQLTPN). Composition is skewed to low complexity over residues 1052 to 1146 (NNNN…NNGN) and 1153 to 1193 (QALH…SPSS).

The protein belongs to the bZIP family. In terms of assembly, binds DNA as a dimer. Heterodimerizes with dimB; in vitro. Also able to form homodimer; in vitro.

It localises to the nucleus. Functionally, transcriptional regulator involved in DIF-1 signaling. DIF-1 (Differentiation Inducing Factor-1) is a signal molecule involved in the differentiation of pstO (prestalk-O) cells. Functions both as an activator of prestalk gene expression and a repressor of prespore gene expression. This chain is Basic-leucine zipper transcription factor A (dimA), found in Dictyostelium discoideum (Social amoeba).